A 351-amino-acid chain; its full sequence is Prohormone-2 (351 aa).

An N-terminal signal peptide occupies residues methionine 1–serine 21. Propeptides lie at residues leucine 22–valine 177 and glutamate 192–arginine 319. Over residues glycine 51–threonine 69 the composition is skewed to polar residues. 2 disordered regions span residues glycine 51 to glutamate 71 and asparagine 136 to glutamine 176. Basic and acidic residues predominate over residues asparagine 136 to lysine 145. The span at proline 158–glutamine 176 shows a compositional bias: low complexity.

It localises to the secreted. This Apis mellifera (Honeybee) protein is Prohormone-2.